Consider the following 621-residue polypeptide: 1-deoxy-D-xylulose-5-phosphate synthase (621 aa).

Residues His-80 and 121–123 (GHS) each bind thiamine diphosphate. Asp-152 contacts Mg(2+). Thiamine diphosphate contacts are provided by residues 153–154 (GA), Asn-181, Tyr-288, and Glu-370. Asn-181 is a binding site for Mg(2+).

This sequence belongs to the transketolase family. DXPS subfamily. Homodimer. The cofactor is Mg(2+). Thiamine diphosphate is required as a cofactor.

The catalysed reaction is D-glyceraldehyde 3-phosphate + pyruvate + H(+) = 1-deoxy-D-xylulose 5-phosphate + CO2. The protein operates within metabolic intermediate biosynthesis; 1-deoxy-D-xylulose 5-phosphate biosynthesis; 1-deoxy-D-xylulose 5-phosphate from D-glyceraldehyde 3-phosphate and pyruvate: step 1/1. In terms of biological role, catalyzes the acyloin condensation reaction between C atoms 2 and 3 of pyruvate and glyceraldehyde 3-phosphate to yield 1-deoxy-D-xylulose-5-phosphate (DXP). The chain is 1-deoxy-D-xylulose-5-phosphate synthase from Shewanella sediminis (strain HAW-EB3).